A 785-amino-acid polypeptide reads, in one-letter code: uncharacterized protein (785 aa).

The region spanning 1–93 (MSWVMVSPEL…GGAYAAAEAA (93 aa)) is the PE domain.

The protein belongs to the mycobacterial PE family. PGRS subfamily.

This is an uncharacterized protein from Mycobacterium tuberculosis (strain CDC 1551 / Oshkosh).